The chain runs to 575 residues: MHRFATGLASKARLARNGANQIASRSNWRRNYAAKDVKFGVEARGLMLKGVEDLADAVKVTMGPKGRTVVIEQSFGAPKVTKDGVTVAKSIEFKDKVKNVGASLVKQVANATNDVAGDGTTCATILTKAIFTEGCKSVASGMNAMDLRRGISMAVDSVVTNLKSRARMISTSEEIAQVGTISANGEREIGELIAKAMEKVGKEGVITISDGKTMDNELEVVEGMKLDRGYISPYFITNQKNQKCELDDPLIIIYEKKISSINAVVKVLELALKKQRPLLIVSEDVESEALATLILNKLRAGIKVCAIKAPGFGENRKAGLQDLAVLTGGQVITEELGMNLEKVDLDMLGSCKKITISKDDTVILDGAGDKKAIEERCDQIRSGIEASTSDYDKEKLQERLAKLSGGVAVLKIGGASEAEVGEKKDRVTDALNATKAAVEEGIVPGGGVALLYASKELDKLPTANFDQKIGVQIIQNALKTPVHTIASNAGVEGAVVVGKLLEQDDPDLGYDAAKGEYVDMVKAGIIDPLKVIRTALVDAASVSSLMTTTEVVVVELPKDENEVPAMGGGMGGMDY.

A mitochondrion-targeting transit peptide spans 1 to 32; it reads MHRFATGLASKARLARNGANQIASRSNWRRNY.

Belongs to the chaperonin (HSP60) family.

It localises to the mitochondrion. Functionally, implicated in mitochondrial protein import and macromolecular assembly. May facilitate the correct folding of imported proteins. May also prevent misfolding and promote the refolding and proper assembly of unfolded polypeptides generated under stress conditions in the mitochondrial matrix. This Cucurbita maxima (Pumpkin) protein is Chaperonin CPN60-1, mitochondrial (CPN60-1).